A 552-amino-acid chain; its full sequence is Urocanate hydratase (552 aa).

Residues 49–50 (GG), Q127, 173–175 (GMG), D193, 239–240 (NA), 260–264 (QTSAH), 270–271 (YI), and Y319 contribute to the NAD(+) site. C407 is a catalytic residue. Position 489 (G489) interacts with NAD(+).

The protein belongs to the urocanase family. The cofactor is NAD(+).

Its subcellular location is the cytoplasm. It carries out the reaction 4-imidazolone-5-propanoate = trans-urocanate + H2O. It functions in the pathway amino-acid degradation; L-histidine degradation into L-glutamate; N-formimidoyl-L-glutamate from L-histidine: step 2/3. Functionally, catalyzes the conversion of urocanate to 4-imidazolone-5-propionate. The chain is Urocanate hydratase from Bacillus cereus (strain G9842).